Consider the following 580-residue polypeptide: Long-chain-fatty-acid--AMP ligase FadD28 (580 aa).

The tract at residues Ser-421–Pro-440 is disordered.

It belongs to the ATP-dependent AMP-binding enzyme family.

It carries out the reaction holo-[mycocerosate synthase] + a long-chain fatty acid + ATP = a long-chain fatty acyl-[mycocerosate synthase] + AMP + diphosphate. It catalyses the reaction a long-chain fatty acid + ATP + H(+) = a long-chain fatty acyl-AMP + diphosphate. The catalysed reaction is holo-[mycocerosate synthase] + a long-chain fatty acyl-AMP = a long-chain fatty acyl-[mycocerosate synthase] + AMP + H(+). The protein operates within lipid metabolism; fatty acid biosynthesis. In terms of biological role, involved in the biosynthesis of phthiocerol dimycocerosate (PDIM), a cell wall-associated lipid found only in pathogenic mycobacteria. Catalyzes the activation of long-chain fatty acids as acyl-adenylates (acyl-AMP), which are then transferred to the multifunctional polyketide synthase Mas for further chain extension. The polypeptide is Long-chain-fatty-acid--AMP ligase FadD28 (fadD28) (Mycobacterium tuberculosis (strain CDC 1551 / Oshkosh)).